The following is a 272-amino-acid chain: MKLRKIFLLPLISLSTLSVACSSTDPGLEKAQAYFQRNNIELSKNNAVTFLKKGYSSDKEEVINTVFASWKTTLLDYQLLEKPLDYSRFAKAFGVNKSKEDVTPNISAKGLYFDETYPGISGQIALVLGVKSQKVVNFQYSWKNNLDFKVQIHLKMTGIVGSDNTSTSLIKSFLASTSGVSESDFTGDKANFDGDVIFTYTPPTDNRRVSESTFSSIPASINFPFDIKIDMSTSHEKLNLLLSTNEQVKKIRTRTFKGKSIDLLPFFYYTLL.

Residues 1–20 (MKLRKIFLLPLISLSTLSVA) form the signal peptide. Cysteine 21 is lipidated: N-palmitoyl cysteine. The S-diacylglycerol cysteine moiety is linked to residue cysteine 21.

The protein belongs to the MG439/MG440 family.

It is found in the cell membrane. This is an uncharacterized protein from Mycoplasma genitalium (strain ATCC 33530 / DSM 19775 / NCTC 10195 / G37) (Mycoplasmoides genitalium).